Here is a 155-residue protein sequence, read N- to C-terminus: Ribonuclease H (155 aa).

One can recognise an RNase H type-1 domain in the interval 9–150; sequence DGQQVEMWTD…ADALANQGVE (142 aa). D18, E56, D78, and D142 together coordinate Mg(2+).

This sequence belongs to the RNase H family. In terms of assembly, monomer. The cofactor is Mg(2+).

Its subcellular location is the cytoplasm. It catalyses the reaction Endonucleolytic cleavage to 5'-phosphomonoester.. Endonuclease that specifically degrades the RNA of RNA-DNA hybrids. The polypeptide is Ribonuclease H (Bordetella bronchiseptica (strain ATCC BAA-588 / NCTC 13252 / RB50) (Alcaligenes bronchisepticus)).